Here is a 477-residue protein sequence, read N- to C-terminus: 3-isopropylmalate dehydratase large subunit (477 aa).

The [4Fe-4S] cluster site is built by Cys352, Cys413, and Cys416.

This sequence belongs to the aconitase/IPM isomerase family. LeuC type 1 subfamily. In terms of assembly, heterodimer of LeuC and LeuD. It depends on [4Fe-4S] cluster as a cofactor.

It carries out the reaction (2R,3S)-3-isopropylmalate = (2S)-2-isopropylmalate. Its pathway is amino-acid biosynthesis; L-leucine biosynthesis; L-leucine from 3-methyl-2-oxobutanoate: step 2/4. Its function is as follows. Catalyzes the isomerization between 2-isopropylmalate and 3-isopropylmalate, via the formation of 2-isopropylmaleate. The chain is 3-isopropylmalate dehydratase large subunit from Pseudomonas putida (strain W619).